A 247-amino-acid chain; its full sequence is 3-deoxy-manno-octulosonate cytidylyltransferase (247 aa).

It belongs to the KdsB family.

Its subcellular location is the cytoplasm. The enzyme catalyses 3-deoxy-alpha-D-manno-oct-2-ulosonate + CTP = CMP-3-deoxy-beta-D-manno-octulosonate + diphosphate. Its pathway is nucleotide-sugar biosynthesis; CMP-3-deoxy-D-manno-octulosonate biosynthesis; CMP-3-deoxy-D-manno-octulosonate from 3-deoxy-D-manno-octulosonate and CTP: step 1/1. It functions in the pathway bacterial outer membrane biogenesis; lipopolysaccharide biosynthesis. Its function is as follows. Activates KDO (a required 8-carbon sugar) for incorporation into bacterial lipopolysaccharide in Gram-negative bacteria. The chain is 3-deoxy-manno-octulosonate cytidylyltransferase from Methylobacterium radiotolerans (strain ATCC 27329 / DSM 1819 / JCM 2831 / NBRC 15690 / NCIMB 10815 / 0-1).